Reading from the N-terminus, the 526-residue chain is AAA ATPase forming ring-shaped complexes (526 aa).

Polar residues predominate over residues 1-18 (MGDMASSTDPAAHNSFSD). A disordered region spans residues 1 to 20 (MGDMASSTDPAAHNSFSDFN). Positions 20–59 (NREEMTRLADNVRSLQRTNQDLSARNTKLAEMLKSSRDKL) form a coiled coil. 257-262 (GCGKTL) is a binding site for ATP.

It belongs to the AAA ATPase family. Homohexamer. Assembles into a hexameric ring structure.

This is AAA ATPase forming ring-shaped complexes from Corynebacterium efficiens (strain DSM 44549 / YS-314 / AJ 12310 / JCM 11189 / NBRC 100395).